The sequence spans 1806 residues: MTQGPRYIRHFHDWIAATESPSTSTEMQWTDTMSGMISLPLLTIMQIVQYFQYLETREITHSQFVEEIRIGGAQGYCGGLLPAAAIAASRNEDEVVHNAGIALRLALAIGAYAELGDDENIPGPTTVVLRTKYSGQAEEIVSKFPGTYISAITDPETISIVGPVNVVEELRAYAEGQGIKATKLHLRGKVHNPENKDLCKEFINLCHKYPSMLMLPTAASLQTSLRSNKTGKELRSSATTASLSIEVLENTLANKCEWYNLLNGMAKDLDAISRTEKEHTFALFGTGRKNCVPTMPFEEKQLRISKLDIVTYVEKHDIPREGRTLDQYPENAIAIVGAGCRLPGANSIDELWEILSAGSSRVEKLRSSRFDLSTVSRGSVGPDAKQTAKRELYGNFLDDVESFDSNFFGISPREAMYMDPQQRLLLETAYEALDGSGYLRTHRRGDFDNVGCFIGASYTEYLENTSSYNPTAYTATGTIRAFQSGRISYHFGWSGPSEVIDTACSASLVAVNRACKAIQSGECPMALAGGVNIITGVNNYFDLGKAGFLSTTGQCKPFDETADGYCRADGVGLVALKSLRQAVADGNNVMGVIMGVGTNQGGLSPAITVPYYRAQISLFKNVLNQSGLKSGQISYVEAHGTGTQVGDPIEISSVREVFGGSDRSEFVNMGSLKANVGHSETAAGIGSLMKVLAMLKHGKIPPLAGFKSLNPKIPALEPDYLRIPTELQDWNSSFRAACVNSYGAAGSNSALICGEAPIVTAMTDVLPTDTNMHETSHLQYPLFLSATNNFTLKANASKLAQYVLKNQPRVADVAYTLYHRRKHHRVQWTGLAHDLESLVRSLDKIEEGLEVPASPKSVVLAFSGQSKQTIGLDPSWYVSFPRLRHYIDLCNKIVIRLGYSTILPAVFATDPVEDVVALQCGTFAFQYACAKCWIDSGLEVKAAVGHSFGELTAMAVTETLSLEDALHLVAARATLVQTKWGSERGTMLAIEATLDTTRQIITVVNENIEIACYNGQKSHVLVGTERSIGQVEHLIATDNRFKGTRNTRVKTSHGFHSVFTEPILPELDEIAQKLEFNAPSIPLETSTEKPINEGEHAVEPSRIVQHTRTPVYFGDAISRLEERLGPCIWLEAGSDSPIIPMVKRATHNPSQHTFLGLKAKDIARPIDVIPQASLTLWQEGMSVSCFDGFYSHPPNGVTSNVFNHIWLPPYQFQRTRHWLQYMDLVTEERKTVDERLRSAGAVGTIASQPQTPPLKLVTARSRDSESWSSLEFAIHSETSRFTDIVSAHAVRDQPLCPASMYMECVVMAAQMVEPSVSVKSLSFQNLSFQGALGINYNRDVSLLMEGDGEYLAWNFTVRSTGKESKGRPTTHAKGRFSVTSHIDFQLYERMLADRMNEILVHPQSERLMAGRAYTLFSRVVNYAESLRGISEITILNNRHAVAEVCRPKVSVSSSESTAVAVCDTVTLDTFIQVVGLLINSSETCPVDEVFIATGIDSIIMQDCDFSDPQHDTWKVYAMATTRSESHVAGDMFVFTKDGKLIFTGSGVQFSRFPIAKLEKVLEGIGMNSAPRSPIGNDGIGKGVTAPPSPTTQFHMNGHAKSTPNRHGLRVRTTVEMDEQTLVAQDSVSRRPSALKSAMIRNDSNLGTLGLDSLSKLEFVNQLRAQLGNEISPTQDLSQIADLYNKLFAHSSTTNSRSAHIDHVHKIELDGPSSPTAVNSPVTAGDSQSKLRIRQRILELITENSGESVSTIKDEVSLQDVGIDSLSVIELKESFEDAFSVQFGDWDFGLHLTVRELVDYVVISSNV.

The region spanning 30-191 (TDTMSGMISL…TKLHLRGKVH (162 aa)) is the Starter acyltransferase (SAT) domain. Residues 330-755 (ENAIAIVGAG…GSNSALICGE (426 aa)) enclose the Ketosynthase family 3 (KS3) domain. Catalysis depends on for beta-ketoacyl synthase activity residues C504, H639, and H678. Residues 860–1156 (LAFSGQSKQT…HNPSQHTFLG (297 aa)) form a malonyl-CoA:ACP transacylase (MAT) domain region. The 286-residue stretch at 862–1147 (FSGQSKQTIG…IIPMVKRATH (286 aa)) folds into the Malonyl-CoA:ACP transacylase (MAT) domain. Catalysis depends on S947, which acts as the For acyl/malonyl transferase activity. Residues 1249–1383 (PQTPPLKLVT…GRFSVTSHID (135 aa)) form an N-terminal hotdog fold region. The region spanning 1249 to 1558 (PQTPPLKLVT…FSRFPIAKLE (310 aa)) is the PKS/mFAS DH domain. Positions 1249-1558 (PQTPPLKLVT…FSRFPIAKLE (310 aa)) are product template (PT) domain. The Proton acceptor; for dehydratase activity role is filled by H1288. The interval 1404–1558 (SERLMAGRAY…FSRFPIAKLE (155 aa)) is C-terminal hotdog fold. The active-site Proton donor; for dehydratase activity is D1468. Positions 1727-1804 (QSKLRIRQRI…ELVDYVVISS (78 aa)) constitute a Carrier domain. Position 1764 is an O-(pantetheine 4'-phosphoryl)serine (S1764).

Pantetheine 4'-phosphate is required as a cofactor.

It functions in the pathway secondary metabolite biosynthesis. Functionally, non-reducing polyketide synthase; part of the gene cluster that mediates the biosynthesis of mitorubrinol and mitorubrinic acid, two virulence factors that improve T.marneffei intracellular survival in macrophages. The two polyketide synthases pks12 and pks11 are probably responsible for sequential use in the biosynthesis of mitorubrinol and mitorubrinic acid. The first part of the biosynthesis is probably catalyzed by pks12, which synthesized orsellinic acid. This tetraketide is then used as a starter unit for pks11, which possesses a SAT domain, in the second part of the biosynthesis. Pks11, contains a methyltransferase domain, also served that methylates the products, using a methyl group from S-adenosylmethionine. The protein is Non-reducing polyketide synthase pks12 of Talaromyces marneffei (Penicillium marneffei).